Reading from the N-terminus, the 163-residue chain is Large ribosomal subunit protein uL10 (163 aa).

It belongs to the universal ribosomal protein uL10 family. Part of the ribosomal stalk of the 50S ribosomal subunit. The N-terminus interacts with L11 and the large rRNA to form the base of the stalk. The C-terminus forms an elongated spine to which L12 dimers bind in a sequential fashion forming a multimeric L10(L12)X complex.

Its function is as follows. Forms part of the ribosomal stalk, playing a central role in the interaction of the ribosome with GTP-bound translation factors. The protein is Large ribosomal subunit protein uL10 (rplJ) of Haemophilus influenzae (strain ATCC 51907 / DSM 11121 / KW20 / Rd).